The sequence spans 720 residues: TAL effector protein Rip19 (720 aa).

Disordered regions lie at residues 13–85 and 175–205; these read SVSL…PSLV and QAFA…PTFL. The span at 67-85 shows a compositional bias: pro residues; that stretch reads PRRPLPVAPASAPPAPSLV. The Nuclear localization signal 1 signature appears at 185 to 191; sequence RSARARR. A Cryptic repeat -1 repeat occupies 286-320; it reads LTRAHIVDIARQRSGDLALQALLPVATALTAAPLR. A Cryptic repeat 0 repeat occupies 321 to 354; sequence LSASQIATVAQYGERPAIQALYRLRRKLTRAPLH. The stretch at 355 to 389 is one Core repeat 1 repeat; the sequence is LTPQQVVAIASHDGGKPALEAVWAKLPVLRGVPYA. The Cryptic repeat +1 repeat unit spans residues 390 to 423; sequence LSTAQVVAIACISGQQALEAIEAHMPTLRQAPHS. The stretch at 424-457 is one Cryptic repeat +2 repeat; sequence LSPERVAAIACIGGRSAVEAVRQGLPVKAIRRIR. Short sequence motifs (nuclear localization signal) lie at residues 455–458, 583–586, and 620–623; these read RIRR, HRKR, and RRKR. Residues 571-611 form a disordered region; that stretch reads SPGMAGQSACSPHRKRPAETAIAPRSIRRRPNNAGQPSEPW.

This sequence belongs to the transcription activator-like effector (TALE) family. RipTAL/RTL subfamily.

It is found in the secreted. The protein resides in the host nucleus. Functionally, does not activate plant gene transcription, because it has too few core repeats. This is TAL effector protein Rip19 from Ralstonia solanacearum (Pseudomonas solanacearum).